A 65-amino-acid chain; its full sequence is Putative beta-neurotoxin RjAa7 (65 aa).

The LCN-type CS-alpha/beta domain maps to 1 to 64 (KEGYPVGRDG…VWDSSTNKCG (64 aa)). Intrachain disulfides connect Cys-11/Cys-63, Cys-15/Cys-37, Cys-22/Cys-44, and Cys-26/Cys-46.

The protein belongs to the long (4 C-C) scorpion toxin superfamily. Sodium channel inhibitor family. Beta subfamily. In terms of tissue distribution, expressed by the venom gland.

The protein localises to the secreted. Functionally, beta toxins bind voltage-independently at site-4 of sodium channels (Nav) and shift the voltage of activation toward more negative potentials thereby affecting sodium channel activation and promoting spontaneous and repetitive firing. The protein is Putative beta-neurotoxin RjAa7 of Rhopalurus junceus (Caribbean blue scorpion).